A 770-amino-acid chain; its full sequence is Amyloid-beta precursor protein (770 aa).

Positions 1-17 are cleaved as a signal peptide; the sequence is MLPGLALVLLAAWTARA. Topologically, residues 18–701 are extracellular; sequence LEVPTDGNAG…AEDVGSNKGA (684 aa). The segment at 28 to 123 is GFLD subdomain; sequence LLAEPQVAMF…PYRCLVGEFV (96 aa). Positions 28-189 constitute an E1 domain; that stretch reads LLAEPQVAMF…RGVEFVCCPL (162 aa). Disulfide bonds link C38/C62, C73/C117, C98/C105, C133/C187, C144/C174, and C158/C186. 96–110 contributes to the heparin binding site; that stretch reads NWCKRSRKQCKTHTH. The interval 131–189 is cuBD subdomain; the sequence is DKCKFLHQERMDVCETHLHWHTVAKETCSEKSTNLHDYGMLLPCGIDKFRGVEFVCCPL. The copper-binding stretch occupies residues 135–155; it reads FLHQERMDVCETHLHWHTVAK. 3 residues coordinate Cu(2+): H147, H151, and Y168. The tract at residues 181–188 is zinc-binding; that stretch reads GVEFVCCP. Positions 183, 186, and 187 each coordinate Zn(2+). The span at 196–207 shows a compositional bias: acidic residues; that stretch reads IDSADAEEDDSD. The tract at residues 196 to 284 is disordered; that stretch reads IDSADAEEDD…TTTTTTESVE (89 aa). Phosphoserine; by CK2 is present on S198. S206 carries the post-translational modification Phosphoserine; by CK1. Residues Y217 and Y262 each carry the sulfotyrosine modification. Acidic residues predominate over residues 228-264; it reads VAEEEEVADVEEEEAEDDEDDEDGDEVEEEAEEPYEE. Low complexity predominate over residues 268–281; the sequence is RTTSIATTTTTTTE. Intrachain disulfides connect C291–C341, C300–C324, and C316–C337. Residues 291-341 form the BPTI/Kunitz inhibitor domain; that stretch reads CSEQAETGPCRAMISRWYFDVTEGKCAPFFYGGCGGNRNNFDTEEYCMAVC. Position 336 is a sulfotyrosine (Y336). The OX-2 signature appears at 344-365; the sequence is VMSQSLLKTTQEHLPQDPVKLP. One can recognise an E2 domain in the interval 374–565; that stretch reads AVDKYLETPG…EEIQDEVDEL (192 aa). The interval 391–423 is heparin-binding; that stretch reads FQKAKERLEAKHRERMSQVMREWEEAERQAKNL. S441 is modified (phosphoserine). Residues 491 to 522 form a heparin-binding region; the sequence is FNMLKKYVRAEQKDRQHTLKHFEHVRMVDPKK. Position 497 is a phosphotyrosine (Y497). A collagen-binding region spans residues 523-540; the sequence is AAQIRSQVMTHLRVIYER. N-linked (GlcNAc...) asparagine glycans are attached at residues N542 and N571. Positions 677, 681, 684, and 685 each coordinate Cu(2+). Zn(2+)-binding residues include H677, Y681, H684, and H685. The segment at 695-722 is interaction with PSEN1; sequence VGSNKGAIIGLMVGGVVIATVIVITLVM. The chain crosses the membrane as a helical span at residues 702 to 722; it reads IIGLMVGGVVIATVIVITLVM. Residues 723-770 are Cytoplasmic-facing; it reads LKKKQYTSIHHGVVEVDAAVTPEERHLSKMQQNGYENPTYKFFEQMQN. Positions 724–734 match the Basolateral sorting signal motif; it reads KKKQYTSIHHG. Position 729 is a phosphothreonine (T729). Position 730 is a phosphoserine; by APP-kinase I (S730). Residues 732–751 are interaction with G(o)-alpha; sequence HHGVVEVDAAVTPEERHLSK. The residue at position 743 (T743) is a Phosphothreonine; by CDK5 and MAPK10. The segment at 756 to 770 is required for the interaction with KIF5B and for anterograde transport in axons; sequence GYENPTYKFFEQMQN. Residue Y757 is modified to Phosphotyrosine; by ABL1. The YENPXY motif; contains endocytosis signal signature appears at 757–762; that stretch reads YENPTY. K763 is covalently cross-linked (Glycyl lysine isopeptide (Lys-Gly) (interchain with G-Cter in ubiquitin)).

Belongs to the APP family. Binds, via its C-terminus, to the PID domain of several cytoplasmic proteins, including APBB family members, the APBA family, MAPK8IP1, SHC1 and NUMB and DAB1. Binding to DAB1 inhibits its serine phosphorylation. Interacts (via NPXY motif) with DAB2 (via PID domain); the interaction is impaired by tyrosine phosphorylation of the NPXY motif. Also interacts with GPCR-like protein BPP, APPBP1, IB1, KNS2 (via its TPR domains), APPBP2 (via BaSS) and DDB1. In vitro, it binds MAPT via the MT-binding domains. Associates with microtubules in the presence of ATP and in a kinesin-dependent manner. Interacts, through a C-terminal domain, with GNAO1. Amyloid-beta protein 42 binds CHRNA7 in hippocampal neurons. Amyloid-beta associates with HADH2. Interacts with CPEB1, ANKS1B and AGER. Interacts with ITM2B. Interacts with ITM2C. Interacts with IDE. Can form homodimers; dimerization is enhanced in the presence of Cu(2+) ions. Can form homodimers; this is promoted by heparin binding. Amyloid-beta protein 40 interacts with S100A9. CTF-alpha product of APP interacts with GSAP. Interacts with SORL1 (via N-terminal ectodomain); this interaction retains APP in the trans-Golgi network and reduces processing into soluble APP-alpha and amyloid-beta peptides. The C99 fragment also interacts with SORL1. Interacts with PLD3. Interacts with VDAC1. Interacts with NSG1; could regulate APP processing. Amyloid-beta protein 42 interacts with FPR2. Interacts (via transmembrane region) with PSEN1; the interaction is direct. Interacts with LRRK2. Interacts (via cytoplasmic domain) with KIF5B. Interacts (via C-terminus) with APBB2/FE65L1 (via C-terminus). Interacts (via intracellular domain) with APBB3. Post-translationally, proteolytically processed under normal cellular conditions. Cleavage either by alpha-secretase, beta-secretase or theta-secretase leads to generation and extracellular release of soluble APP peptides, S-APP-alpha and S-APP-beta, and the retention of corresponding membrane-anchored C-terminal fragments, C80, C83 and C99. Subsequent processing of C80 and C83 by gamma-secretase yields P3 peptides. This is the major secretory pathway and is non-amyloidogenic. Alternatively, presenilin/nicastrin-mediated gamma-secretase processing of C99 releases the amyloid-beta proteins, amyloid-beta protein 40 and amyloid-beta protein 42, major components of amyloid plaques, and the cytotoxic C-terminal fragments, gamma-CTF(50), gamma-CTF(57) and gamma-CTF(59). PSEN1 cleavage is more efficient with C83 than with C99 as substrate (in vitro). Amyloid-beta protein 40 and Amyloid-beta protein 42 are cleaved by ACE. Many other minor amyloid-beta peptides, amyloid-beta 1-X peptides, are found in cerebral spinal fluid (CSF) including the amyloid-beta X-15 peptides, produced from the cleavage by alpha-secretase. In terms of processing, proteolytically cleaved by caspases during neuronal apoptosis. Cleavage at Asp-739 by either caspase-3, -8 or -9 results in the production of the neurotoxic C31 peptide and the increased production of amyloid-beta peptides. N- and O-glycosylated. Post-translationally, phosphorylation in the C-terminal on tyrosine, threonine and serine residues is neuron-specific. Phosphorylation can affect APP processing, neuronal differentiation and interaction with other proteins. Phosphorylated on Thr-743 in neuronal cells by Cdc5 kinase and Mapk10, in dividing cells by Cdc2 kinase in a cell-cycle dependent manner with maximal levels at the G2/M phase and, in vitro, by GSK-3-beta. The Thr-743 phosphorylated form causes a conformational change which reduces binding of Fe65 family members. In dopaminergic (DA) neurons, phosphorylation on Thr-743 by LRKK2 promotes the production and the nuclear translocation of the APP intracellular domain (AICD) which induces DA neuron apoptosis. Phosphorylation on Tyr-757 is required for SHC binding. Phosphorylated in the extracellular domain by casein kinases on both soluble and membrane-bound APP. This phosphorylation is inhibited by heparin. In terms of processing, extracellular binding and reduction of copper, results in a corresponding oxidation of Cys-144 and Cys-158, and the formation of a disulfide bond. Trophic-factor deprivation triggers the cleavage of surface APP by beta-secretase to release sAPP-beta which is further cleaved to release an N-terminal fragment of APP (N-APP). Post-translationally, amyloid-beta peptides are degraded by IDE. In terms of processing, sulfated on tyrosine residues.

Its subcellular location is the cell membrane. It localises to the membrane. The protein localises to the perikaryon. The protein resides in the cell projection. It is found in the growth cone. Its subcellular location is the clathrin-coated pit. It localises to the early endosome. The protein localises to the cytoplasmic vesicle. The protein resides in the endoplasmic reticulum. It is found in the golgi apparatus. Its subcellular location is the secreted. It localises to the cell surface. The protein localises to the nucleus. The protein resides in the cytoplasm. Functionally, functions as a cell surface receptor and performs physiological functions on the surface of neurons relevant to neurite growth, neuronal adhesion and axonogenesis. Interaction between APP molecules on neighboring cells promotes synaptogenesis. Involved in cell mobility and transcription regulation through protein-protein interactions. Can promote transcription activation through binding to APBB1-KAT5 and inhibit Notch signaling through interaction with Numb. Couples to apoptosis-inducing pathways such as those mediated by G(o) and JIP. Inhibits G(o)-alpha ATPase activity. Acts as a kinesin I membrane receptor, mediating the axonal transport of beta-secretase and presenilin 1. By acting as a kinesin I membrane receptor, plays a role in axonal anterograde transport of cargo towards synapses in axons. May be involved in copper homeostasis/oxidative stress through copper ion reduction. In vitro, copper-metallated APP induces neuronal death directly or is potentiated through Cu(2+)-mediated low-density lipoprotein oxidation. Can regulate neurite outgrowth through binding to components of the extracellular matrix such as heparin and collagen I and IV. Induces a AGER-dependent pathway that involves activation of p38 MAPK, resulting in internalization of amyloid-beta peptide and mitochondrial dysfunction in cultured cortical neurons. Provides Cu(2+) ions for GPC1 which are required for release of nitric oxide (NO) and subsequent degradation of the heparan sulfate chains on GPC1. Its function is as follows. Amyloid-beta peptides are lipophilic metal chelators with metal-reducing activity. Binds transient metals such as copper, zinc and iron. In terms of biological role, the gamma-CTF peptides as well as the caspase-cleaved peptides, including C31, are potent enhancers of neuronal apoptosis. The sequence is that of Amyloid-beta precursor protein from Sus scrofa (Pig).